We begin with the raw amino-acid sequence, 337 residues long: Phosphatidate cytidylyltransferase, mitochondrial (337 aa).

This sequence belongs to the TAM41 family. Mg(2+) serves as cofactor. Brain and liver.

The protein resides in the mitochondrion inner membrane. It carries out the reaction a 1,2-diacyl-sn-glycero-3-phosphate + CTP + H(+) = a CDP-1,2-diacyl-sn-glycerol + diphosphate. The protein operates within phospholipid metabolism; CDP-diacylglycerol biosynthesis; CDP-diacylglycerol from sn-glycerol 3-phosphate: step 3/3. Catalyzes the conversion of phosphatidic acid (PA) to CDP-diacylglycerol (CDP-DAG), an essential intermediate in the synthesis of phosphatidylglycerol, cardiolipin and phosphatidylinositol. This Rattus norvegicus (Rat) protein is Phosphatidate cytidylyltransferase, mitochondrial (Tamm41).